A 431-amino-acid chain; its full sequence is Serine--tRNA ligase (431 aa).

Residue 236 to 238 participates in L-serine binding; that stretch reads TAE. Residue 267–269 coordinates ATP; that stretch reads RSE. Position 290 (E290) interacts with L-serine. Position 354–357 (354–357) interacts with ATP; it reads EISS. S389 provides a ligand contact to L-serine.

This sequence belongs to the class-II aminoacyl-tRNA synthetase family. Type-1 seryl-tRNA synthetase subfamily. In terms of assembly, homodimer. The tRNA molecule binds across the dimer.

It localises to the cytoplasm. The catalysed reaction is tRNA(Ser) + L-serine + ATP = L-seryl-tRNA(Ser) + AMP + diphosphate + H(+). It catalyses the reaction tRNA(Sec) + L-serine + ATP = L-seryl-tRNA(Sec) + AMP + diphosphate + H(+). It participates in aminoacyl-tRNA biosynthesis; selenocysteinyl-tRNA(Sec) biosynthesis; L-seryl-tRNA(Sec) from L-serine and tRNA(Sec): step 1/1. In terms of biological role, catalyzes the attachment of serine to tRNA(Ser). Is also able to aminoacylate tRNA(Sec) with serine, to form the misacylated tRNA L-seryl-tRNA(Sec), which will be further converted into selenocysteinyl-tRNA(Sec). In Janthinobacterium sp. (strain Marseille) (Minibacterium massiliensis), this protein is Serine--tRNA ligase.